The sequence spans 555 residues: DNA ligase (555 aa).

ATP is bound at residue Glu-247. Residue Lys-249 is the N6-AMP-lysine intermediate of the active site. Positions 254, 269, 298, 337, 411, and 417 each coordinate ATP.

This sequence belongs to the ATP-dependent DNA ligase family. Mg(2+) is required as a cofactor.

The enzyme catalyses ATP + (deoxyribonucleotide)n-3'-hydroxyl + 5'-phospho-(deoxyribonucleotide)m = (deoxyribonucleotide)n+m + AMP + diphosphate.. Functionally, DNA ligase that seals nicks in double-stranded DNA during DNA replication, DNA recombination and DNA repair. The sequence is that of DNA ligase from Archaeoglobus fulgidus (strain ATCC 49558 / DSM 4304 / JCM 9628 / NBRC 100126 / VC-16).